The sequence spans 290 residues: 33 kDa chaperonin (290 aa).

Disulfide bonds link Cys231-Cys233 and Cys264-Cys267.

The protein belongs to the HSP33 family. Under oxidizing conditions two disulfide bonds are formed involving the reactive cysteines. Under reducing conditions zinc is bound to the reactive cysteines and the protein is inactive.

The protein resides in the cytoplasm. Its function is as follows. Redox regulated molecular chaperone. Protects both thermally unfolding and oxidatively damaged proteins from irreversible aggregation. Plays an important role in the bacterial defense system toward oxidative stress. This Photorhabdus laumondii subsp. laumondii (strain DSM 15139 / CIP 105565 / TT01) (Photorhabdus luminescens subsp. laumondii) protein is 33 kDa chaperonin.